Consider the following 154-residue polypeptide: Myoglobin (154 aa).

One can recognise a Globin domain in the interval 2–148 (GLSDQEWQQV…FRNDMASKYK (147 aa)). Nitrite is bound at residue His-65. His-65 serves as a coordination point for O2. His-94 is a heme b binding site.

The protein belongs to the globin family. As to quaternary structure, monomeric.

It is found in the cytoplasm. It localises to the sarcoplasm. The catalysed reaction is Fe(III)-heme b-[protein] + nitric oxide + H2O = Fe(II)-heme b-[protein] + nitrite + 2 H(+). The enzyme catalyses H2O2 + AH2 = A + 2 H2O. In terms of biological role, monomeric heme protein which primary function is to store oxygen and facilitate its diffusion within muscle tissues. Reversibly binds oxygen through a pentacoordinated heme iron and enables its timely and efficient release as needed during periods of heightened demand. Depending on the oxidative conditions of tissues and cells, and in addition to its ability to bind oxygen, it also has a nitrite reductase activity whereby it regulates the production of bioactive nitric oxide. Under stress conditions, like hypoxia and anoxia, it also protects cells against reactive oxygen species thanks to its pseudoperoxidase activity. In Gallus gallus (Chicken), this protein is Myoglobin (MB).